The chain runs to 448 residues: Adenylosuccinate synthetase (448 aa).

GTP is bound by residues 22 to 28 and 50 to 52; these read GDEGKGK and GHT. The active-site Proton acceptor is the Asp23. Mg(2+) is bound by residues Asp23 and Gly50. IMP contacts are provided by residues 23 to 26, 48 to 51, Thr139, Arg153, Gln234, Thr249, and Arg321; these read DEGK and NAGH. The active-site Proton donor is His51. 317-323 contacts substrate; sequence SVTGRPR. GTP is bound by residues Arg323, 349–351, and 431–433; these read KLD and STG.

This sequence belongs to the adenylosuccinate synthetase family. Homodimer. Mg(2+) is required as a cofactor.

Its subcellular location is the cytoplasm. The enzyme catalyses IMP + L-aspartate + GTP = N(6)-(1,2-dicarboxyethyl)-AMP + GDP + phosphate + 2 H(+). Its pathway is purine metabolism; AMP biosynthesis via de novo pathway; AMP from IMP: step 1/2. In terms of biological role, plays an important role in the de novo pathway of purine nucleotide biosynthesis. Catalyzes the first committed step in the biosynthesis of AMP from IMP. The chain is Adenylosuccinate synthetase from Burkholderia pseudomallei (strain 1106a).